Reading from the N-terminus, the 524-residue chain is uncharacterized protein (524 aa).

A helical transmembrane segment spans residues 13–33; that stretch reads EFILLILGMTVVGIVITMGLV.

It localises to the membrane. This is an uncharacterized protein from Methanocaldococcus jannaschii (strain ATCC 43067 / DSM 2661 / JAL-1 / JCM 10045 / NBRC 100440) (Methanococcus jannaschii).